Here is a 75-residue protein sequence, read N- to C-terminus: Exodeoxyribonuclease 7 small subunit (75 aa).

It belongs to the XseB family. As to quaternary structure, heterooligomer composed of large and small subunits.

Its subcellular location is the cytoplasm. It catalyses the reaction Exonucleolytic cleavage in either 5'- to 3'- or 3'- to 5'-direction to yield nucleoside 5'-phosphates.. In terms of biological role, bidirectionally degrades single-stranded DNA into large acid-insoluble oligonucleotides, which are then degraded further into small acid-soluble oligonucleotides. This chain is Exodeoxyribonuclease 7 small subunit, found in Listeria welshimeri serovar 6b (strain ATCC 35897 / DSM 20650 / CCUG 15529 / CIP 8149 / NCTC 11857 / SLCC 5334 / V8).